We begin with the raw amino-acid sequence, 218 residues long: Mediator of RNA polymerase II transcription subunit 20 (218 aa).

It belongs to the Mediator complex subunit 20 family. As to quaternary structure, component of the Mediator complex.

The protein resides in the nucleus. Functionally, component of the Mediator complex, a coactivator involved in the regulated transcription of nearly all RNA polymerase II-dependent genes. Mediator functions as a bridge to convey information from gene-specific regulatory proteins to the basal RNA polymerase II transcription machinery. Mediator is recruited to promoters by direct interactions with regulatory proteins and serves as a scaffold for the assembly of a functional preinitiation complex with RNA polymerase II and the general transcription factors. The protein is Mediator of RNA polymerase II transcription subunit 20 (MED20) of Anopheles gambiae (African malaria mosquito).